The chain runs to 355 residues: NADH-quinone oxidoreductase subunit H (355 aa).

A run of 8 helical transmembrane segments spans residues 17 to 37 (IIMVAESVLVLVVLLVAIAYI), 86 to 106 (GVFLLAPLVSCVLALAAWAVI), 119 to 139 (VGILFIFAISSLSIYGIIMAG), 165 to 185 (IGFVIITVLLCAGTLNLSAVV), 204 to 224 (ILNWYVWPLFPMFVVFYVSAL), 262 to 282 (YVAIVTMCAMATILFLGGWLP), 291 to 311 (WVPGIIWFLLKVFFMFFLFAM), and 332 to 352 (FLPLSLAMVIVVAGVLHFAGI).

Belongs to the complex I subunit 1 family. NDH-1 is composed of 14 different subunits. Subunits NuoA, H, J, K, L, M, N constitute the membrane sector of the complex.

The protein localises to the cell inner membrane. The enzyme catalyses a quinone + NADH + 5 H(+)(in) = a quinol + NAD(+) + 4 H(+)(out). Functionally, NDH-1 shuttles electrons from NADH, via FMN and iron-sulfur (Fe-S) centers, to quinones in the respiratory chain. The immediate electron acceptor for the enzyme in this species is believed to be ubiquinone. Couples the redox reaction to proton translocation (for every two electrons transferred, four hydrogen ions are translocated across the cytoplasmic membrane), and thus conserves the redox energy in a proton gradient. This subunit may bind ubiquinone. The polypeptide is NADH-quinone oxidoreductase subunit H (Bradyrhizobium diazoefficiens (strain JCM 10833 / BCRC 13528 / IAM 13628 / NBRC 14792 / USDA 110)).